We begin with the raw amino-acid sequence, 491 residues long: MKYQAKNTALSQATDCIVLGIYENNKFSKSFNEIDQLTQGYLNDLVKSGELTGKLAQTILLRDLQGLSAKRLLIVGCGKKGELTERQYKQIIQAVLKTLKETNTREVISYLTEIELKDRDLYWNIRFAIETIEHTNYQFDHFKSQKAETSVLESFIFNTDCNQAQQAISHANAISSGIKAARDIANMPPNICNPAYLAEQAKNLAENSTALSLKVVDEEEMAKLGMNAYLAVSKGSENRAYMSVLTFNNAPDKNAKPIVLVGKGLTFDAGGISLKPAADMDEMKYDMCGAASVFGTMKAIAQLNLPLNVIGVLAGCENLPDGNAYRPGDILTTMNGLTVEVLNTDAEGRLVLCDALTYVERFEPELVIDVATLTGACVVALGQHNSGLVSTDNNLANALLQAATETTDKAWRLPLSEEYQEQLKSPFADLANIGGRWGGAITAGAFLSNFTKKYRWAHLDIAGTAWLQGANKGATGRPVSLLTQFLINQVK.

Mn(2+) is bound by residues lysine 263 and aspartate 268. Lysine 275 is an active-site residue. The Mn(2+) site is built by aspartate 286, aspartate 345, and glutamate 347. Arginine 349 is an active-site residue.

The protein belongs to the peptidase M17 family. Mn(2+) serves as cofactor.

The protein resides in the cytoplasm. The catalysed reaction is Release of an N-terminal amino acid, Xaa-|-Yaa-, in which Xaa is preferably Leu, but may be other amino acids including Pro although not Arg or Lys, and Yaa may be Pro. Amino acid amides and methyl esters are also readily hydrolyzed, but rates on arylamides are exceedingly low.. It carries out the reaction Release of an N-terminal amino acid, preferentially leucine, but not glutamic or aspartic acids.. Its function is as follows. Presumably involved in the processing and regular turnover of intracellular proteins. Catalyzes the removal of unsubstituted N-terminal amino acids from various peptides. This Haemophilus influenzae (strain PittEE) protein is Probable cytosol aminopeptidase.